A 724-amino-acid polypeptide reads, in one-letter code: Pediocin PA-1 transport/processing ATP-binding protein PedD (724 aa).

The 128-residue stretch at 13–140 folds into the Peptidase C39 domain; that stretch reads QVDENDCGLA…KEWTQIAIII (128 aa). Cysteine 19 is a catalytic residue. The next 6 helical transmembrane spans lie at 170–190, 207–227, 284–304, 307–327, 396–416, and 426–446; these read IGLIITAAAITTLISIAGAYF, LSLVAIGLIVAYAFQAIINYI, TTLTLFLDMWILLAVGLFLAY, INLFLCSLVVVPIYISIVWLF, IKAATKLILTIVILWWGTFFV, and LLTYNALLAYFLTPLENIINL. Residues 170–452 form the ABC transmembrane type-1 domain; it reads IGLIITAAAI…IINLQPKLQA (283 aa). Residues 486-722 form the ABC transporter domain; the sequence is IEVNHVSFNY…NGYYARLIHN (237 aa). 519-526 serves as a coordination point for ATP; that stretch reads GMSGSGKT.

Belongs to the ABC transporter superfamily. Pediocin PA-1 exporter (TC 3.A.1.112.2) family.

It is found in the cell membrane. Functionally, involved in the export process of the bacteriocin pediocin PA-1/AcH. Is also essential for pediocin production. The polypeptide is Pediocin PA-1 transport/processing ATP-binding protein PedD (pedD) (Pediococcus acidilactici).